We begin with the raw amino-acid sequence, 349 residues long: Dihydroorotate dehydrogenase (quinone) (349 aa).

FMN-binding positions include 65 to 69 (AGFDK) and alanine 89. Substrate is bound at residue lysine 69. 114–118 (NRMGF) is a binding site for substrate. 2 residues coordinate FMN: asparagine 143 and asparagine 176. Asparagine 176 serves as a coordination point for substrate. The Nucleophile role is filled by serine 179. Position 181 (asparagine 181) interacts with substrate. The FMN site is built by lysine 212 and threonine 240. 241–242 (NT) is a substrate binding site. The segment at 244 to 265 (TERPESLSHPHAGEQGGLSGAP) is disordered. Over residues 245 to 255 (ERPESLSHPHA) the composition is skewed to basic and acidic residues. FMN contacts are provided by residues glycine 263, glycine 290, and 311-312 (YT).

The protein belongs to the dihydroorotate dehydrogenase family. Type 2 subfamily. In terms of assembly, monomer. FMN serves as cofactor.

Its subcellular location is the cell membrane. It carries out the reaction (S)-dihydroorotate + a quinone = orotate + a quinol. It functions in the pathway pyrimidine metabolism; UMP biosynthesis via de novo pathway; orotate from (S)-dihydroorotate (quinone route): step 1/1. Functionally, catalyzes the conversion of dihydroorotate to orotate with quinone as electron acceptor. The polypeptide is Dihydroorotate dehydrogenase (quinone) (Halobacterium salinarum (strain ATCC 29341 / DSM 671 / R1)).